The sequence spans 379 residues: Dual-specificity RNA methyltransferase RlmN (379 aa).

Glutamate 95 acts as the Proton acceptor in catalysis. The 245-residue stretch at 101-345 (EETRGTLCVS…TTVRKTRGDD (245 aa)) folds into the Radical SAM core domain. An intrachain disulfide couples cysteine 108 to cysteine 350. Cysteine 115, cysteine 119, and cysteine 122 together coordinate [4Fe-4S] cluster. S-adenosyl-L-methionine contacts are provided by residues 176 to 177 (GE), serine 208, 230 to 232 (SLH), and asparagine 307. Residue cysteine 350 is the S-methylcysteine intermediate of the active site.

Belongs to the radical SAM superfamily. RlmN family. It depends on [4Fe-4S] cluster as a cofactor.

The protein localises to the cytoplasm. It carries out the reaction adenosine(2503) in 23S rRNA + 2 reduced [2Fe-2S]-[ferredoxin] + 2 S-adenosyl-L-methionine = 2-methyladenosine(2503) in 23S rRNA + 5'-deoxyadenosine + L-methionine + 2 oxidized [2Fe-2S]-[ferredoxin] + S-adenosyl-L-homocysteine. The catalysed reaction is adenosine(37) in tRNA + 2 reduced [2Fe-2S]-[ferredoxin] + 2 S-adenosyl-L-methionine = 2-methyladenosine(37) in tRNA + 5'-deoxyadenosine + L-methionine + 2 oxidized [2Fe-2S]-[ferredoxin] + S-adenosyl-L-homocysteine. Its function is as follows. Specifically methylates position 2 of adenine 2503 in 23S rRNA and position 2 of adenine 37 in tRNAs. m2A2503 modification seems to play a crucial role in the proofreading step occurring at the peptidyl transferase center and thus would serve to optimize ribosomal fidelity. The sequence is that of Dual-specificity RNA methyltransferase RlmN from Burkholderia cenocepacia (strain ATCC BAA-245 / DSM 16553 / LMG 16656 / NCTC 13227 / J2315 / CF5610) (Burkholderia cepacia (strain J2315)).